Consider the following 570-residue polypeptide: Grayanic acid biosynthesis cluster cytochrome P450 monooxygenase (570 aa).

The helical transmembrane segment at I9 to I29 threads the bilayer. N191 is a glycosylation site (N-linked (GlcNAc...) asparagine). Residue C510 coordinates heme.

It belongs to the cytochrome P450 family. The cofactor is heme.

It localises to the membrane. It functions in the pathway secondary metabolite biosynthesis. Functionally, non-reducing polyketide synthase; part of the gene cluster that mediates the biosynthesis of orcinol depsidone grayanic acid (GRA), the only major secondary metabolite known in C.grayi. The first step consists in the ring and depside synthesis by PKS16 leading to 4-O-demethylsphaerophorin, involving different orcinol-like rings, one with acetyl CoA and the other with octanoyl CoA as the starter. Further depsidone formation by the GRA cluster-specific cytochrome P450 leads to 4-O-demethylgrayanic acid. Finally, the cluster specific O-methyltransferase probably converts the 4-O-demethylgrayanic acid into grayanic acid. The protein is Grayanic acid biosynthesis cluster cytochrome P450 monooxygenase of Cladonia grayi (Gray's cup lichen).